A 291-amino-acid polypeptide reads, in one-letter code: Ribosomal large subunit pseudouridine synthase B (291 aa).

The S4 RNA-binding domain occupies 3–63 (EKLQKVLARA…GHLISVKESA (61 aa)). D110 (nucleophile) is an active-site residue. The disordered stretch occupies residues 272 to 291 (VKRHSQIAGGRRSGGRNNNG).

This sequence belongs to the pseudouridine synthase RsuA family.

The catalysed reaction is uridine(2605) in 23S rRNA = pseudouridine(2605) in 23S rRNA. In terms of biological role, responsible for synthesis of pseudouridine from uracil-2605 in 23S ribosomal RNA. The protein is Ribosomal large subunit pseudouridine synthase B (rluB) of Salmonella typhi.